The following is a 115-amino-acid chain: Large ribosomal subunit protein uL24 (115 aa).

It belongs to the universal ribosomal protein uL24 family. Part of the 50S ribosomal subunit.

Functionally, one of two assembly initiator proteins, it binds directly to the 5'-end of the 23S rRNA, where it nucleates assembly of the 50S subunit. One of the proteins that surrounds the polypeptide exit tunnel on the outside of the subunit. The protein is Large ribosomal subunit protein uL24 of Beutenbergia cavernae (strain ATCC BAA-8 / DSM 12333 / CCUG 43141 / JCM 11478 / NBRC 16432 / NCIMB 13614 / HKI 0122).